Here is a 499-residue protein sequence, read N- to C-terminus: Cryptochrome-1 (499 aa).

Residues Arg-190, Ser-218, Ser-220, Gln-261, His-328, Asp-360–Asp-362, Cys-366, and Asn-369 each bind FAD.

Belongs to the DNA photolyase class-1 family. As to quaternary structure, interacts with tim and per; promoted by light conditions. FAD serves as cofactor.

The protein resides in the cytoplasm. Its subcellular location is the perinuclear region. The protein localises to the nucleus. Its function is as follows. Blue light-dependent regulator that is the input of the circadian feedback loop. Has no photolyase activity for cyclobutane pyrimidine dimers or 6-4 photoproducts. Regulation of expression by light suggests a role in photoreception for locomotor activity rhythms. Functions, together with per, as a transcriptional repressor required for the oscillation of peripheral circadian clocks and for the correct specification of clock cells. Genes directly activated by the transcription factors Clock (Clk) and cycle (cyc) are repressed by cry. The polypeptide is Cryptochrome-1 (Culex quinquefasciatus (Southern house mosquito)).